The chain runs to 678 residues: ERAD-associated E3 ubiquitin-protein ligase component HRD3A (678 aa).

Residues 1 to 25 (MRILSYGIVILSLLVFSFIEFGVHA) form the signal peptide. A disordered region spans residues 40-71 (GGDDNGVGESSDFDEFGESEPKSEEELDPGSW). Sel1-like repeat units follow at residues 124 to 159 (PHAQ…AGGN), 242 to 277 (ANAM…VDKG), 279 to 313 (PRSM…AKEG), 317 to 349 (AFNG…AVDN), 353 to 386 (SGHY…ANAG), 388 to 422 (PKAF…AERG), 506 to 537 (AALL…AKSQ), and 540 to 568 (AQAM…RYYD). N-linked (GlcNAc...) asparagine glycans are attached at residues Asn-298 and Asn-335. Residues 620 to 640 (VVFEEGNATILTLFVCLITIL) traverse the membrane as a helical segment.

It belongs to the sel-1 family. In terms of assembly, interacts with OS9.

It is found in the endoplasmic reticulum membrane. Functionally, component of the endoplasmic reticulum (ER) quality control system called ER-associated degradation (ERAD) and involved in ubiquitin-dependent degradation of misfolded endoplasmic reticulum proteins. Functions as an ERAD substrate-recruiting factor that recognizes misfolded proteins for the HRD1 E3 ubiquitin ligase complex. Targets the misfolded LRR receptor kinase BRI1. This chain is ERAD-associated E3 ubiquitin-protein ligase component HRD3A, found in Arabidopsis thaliana (Mouse-ear cress).